We begin with the raw amino-acid sequence, 248 residues long: 4-hydroxy-tetrahydrodipicolinate reductase (248 aa).

NAD(+) contacts are provided by residues Gly-9–Val-14, Gly-77–Thr-79, and Ala-104–Phe-107. The Proton donor/acceptor role is filled by His-134. His-135 is a (S)-2,3,4,5-tetrahydrodipicolinate binding site. The Proton donor role is filled by Lys-138. A (S)-2,3,4,5-tetrahydrodipicolinate-binding site is contributed by Gly-144–Thr-145.

Belongs to the DapB family.

The protein resides in the cytoplasm. The enzyme catalyses (S)-2,3,4,5-tetrahydrodipicolinate + NAD(+) + H2O = (2S,4S)-4-hydroxy-2,3,4,5-tetrahydrodipicolinate + NADH + H(+). It carries out the reaction (S)-2,3,4,5-tetrahydrodipicolinate + NADP(+) + H2O = (2S,4S)-4-hydroxy-2,3,4,5-tetrahydrodipicolinate + NADPH + H(+). It functions in the pathway amino-acid biosynthesis; L-lysine biosynthesis via DAP pathway; (S)-tetrahydrodipicolinate from L-aspartate: step 4/4. Its function is as follows. Catalyzes the conversion of 4-hydroxy-tetrahydrodipicolinate (HTPA) to tetrahydrodipicolinate. This Corynebacterium glutamicum (strain ATCC 13032 / DSM 20300 / JCM 1318 / BCRC 11384 / CCUG 27702 / LMG 3730 / NBRC 12168 / NCIMB 10025 / NRRL B-2784 / 534) protein is 4-hydroxy-tetrahydrodipicolinate reductase.